The chain runs to 414 residues: uncharacterized protein (414 aa).

The segment at 204–230 is disordered; it reads LVGTPAPGPNGSNSDGDSERASQDVRD. Basic and acidic residues predominate over residues 220–230; that stretch reads DSERASQDVRD.

Belongs to the CdaR family.

This is an uncharacterized protein from Mycobacterium tuberculosis (strain CDC 1551 / Oshkosh).